The sequence spans 39 residues: uncharacterized protein (39 aa).

The protein belongs to the orthopoxvirus A30.5 protein family.

This is an uncharacterized protein from Bos taurus (Bovine).